Reading from the N-terminus, the 419-residue chain is Zinc metalloproteinase-disintegrin-like atrolysin-A (419 aa).

The Peptidase M12B domain occupies 6–202 (RYVELVIVAD…YNPQCILNEP (197 aa)). Glu-9 is a binding site for Ca(2+). A glycan (N-linked (GlcNAc...) asparagine) is linked at Asn-72. Residue Asp-93 coordinates Ca(2+). Intrachain disulfides connect Cys-117/Cys-197, Cys-157/Cys-181, and Cys-159/Cys-164. His-142 is a Zn(2+) binding site. The active site involves Glu-143. His-146 and His-152 together coordinate Zn(2+). Residues Cys-197, Asn-200, Val-212, Asn-215, Leu-217, Glu-219, Glu-222, and Asp-225 each coordinate Ca(2+). The Disintegrin domain occupies 210–296 (PPVCGNELLE…DCPTDDFHRN (87 aa)). 14 cysteine pairs are disulfide-bonded: Cys-213/Cys-242, Cys-224/Cys-237, Cys-226/Cys-232, Cys-236/Cys-259, Cys-250/Cys-256, Cys-255/Cys-281, Cys-268/Cys-288, Cys-275/Cys-307, Cys-300/Cys-312, Cys-319/Cys-369, Cys-334/Cys-376, Cys-347/Cys-357, Cys-364/Cys-398, and Cys-392/Cys-403. The short motif at 274–276 (ECD) is the D/ECD-tripeptide element. Residues Asn-326, Asn-338, and Asn-342 are each glycosylated (N-linked (GlcNAc...) asparagine).

Belongs to the venom metalloproteinase (M12B) family. P-III subfamily. P-IIIa sub-subfamily. As to quaternary structure, monomer. The cofactor is Zn(2+). As to expression, expressed by the venom gland.

Its subcellular location is the secreted. It carries out the reaction Cleavage of 3-Asn-|-Gln-4, 5-His-|-Leu-6, 10-His-|-Leu-11, 14-Ala-|-Leu-15 and 16-Tyr-|-Leu-17 in insulin B chain. Removes C-terminal Leu from small peptides.. Its function is as follows. Snake venom zinc metalloproteinase-disintegrin that causes hemorrhage by provoking the degradation of the sub-endothelial matrix proteins (fibronectin, laminin, type IV collagen, nidogen, and gelatins) and disturbances in platelet function. The recombinant cysteine-rich domain interacts with the alpha-2/beta-1 integrin (ITGA2/ITGB1) (collagen receptor), and inhibits the platelet aggregation induced by collagen. This Crotalus atrox (Western diamondback rattlesnake) protein is Zinc metalloproteinase-disintegrin-like atrolysin-A.